The following is a 177-amino-acid chain: tRNA-splicing endonuclease (177 aa).

Catalysis depends on residues Tyr114, His123, and Lys154.

It belongs to the tRNA-intron endonuclease family. Archaeal short subfamily. In terms of assembly, homotetramer; although the tetramer contains four active sites, only two participate in the cleavage. Therefore, it should be considered as a dimer of dimers.

It carries out the reaction pretRNA = a 3'-half-tRNA molecule with a 5'-OH end + a 5'-half-tRNA molecule with a 2',3'-cyclic phosphate end + an intron with a 2',3'-cyclic phosphate and a 5'-hydroxyl terminus.. Endonuclease that removes tRNA introns. Cleaves pre-tRNA at the 5'- and 3'-splice sites to release the intron. The products are an intron and two tRNA half-molecules bearing 2',3' cyclic phosphate and 5'-OH termini. Recognizes a pseudosymmetric substrate in which 2 bulged loops of 3 bases are separated by a stem of 4 bp. This Methanococcus vannielii (strain ATCC 35089 / DSM 1224 / JCM 13029 / OCM 148 / SB) protein is tRNA-splicing endonuclease.